Here is a 636-residue protein sequence, read N- to C-terminus: MGKSSKKSVTEVETPASMTKPLKKGKRDAEEDLDMQVTKKQKKELIDVVQKEKAEKTVPKKVESSSSDASDSDEEEKTKETPSKLKDESSSEEEDDSSSDEEIAPAKKRPEPIKKAKVESSSSDDDSTSDEETAPVKKQPAVLEKAKVESSSSDDDSSSDEETVPVKKQPAVLEKAKIESSSSDDDSSSDEETVPMKKQTAVLEKAKAESSSSDDGSSSDEEPTPAKKEPIVVKKDSSDESSSDEETPVVKKKPTTVVKDAKAESSSSEEESSSDDEPTPAKKPTVVKNAKPAAKDSSSSEEDSDEEESDDEKPPTKKAKVSSKTSKQESSSDESSDESDKEESKDEKVTPKKKDSDVEMVDAEQKSNAKQPKTPTNQTQGGSKTLFAGNLSYQIARSDIENFFKEAGEVVDVRLSSFDDGSFKGYGHIEFASPEEAQKALEMNGKLLLGRDVRLDLANERGTPRNSNPGRKGEGSQSRTIYVRGFSSSLGEDEIKKELRSHFSKCGEVTRVHVPTDRETGASRGFAYIDLTSGFDEALQLSGSEIGGGNIHVEESRPRDSDEGRSSNRAPARGAPRGRHSDRAPRGGRFSDRAPRGRHSDRGAPRGRFSTRGRGPSKPSVMESSKGTKTVFNDEE.

Disordered regions lie at residues 1-386, 458-481, and 544-636; these read MGKS…SKTL, ANER…SRTI, and SEIG…NDEE. Composition is skewed to basic and acidic residues over residues 43-63 and 76-89; these read KELI…KKVE and EKTK…KDES. Positions 90–103 are enriched in acidic residues; sequence SSEEEDDSSSDEEI. Over residues 104-118 the composition is skewed to basic and acidic residues; sequence APAKKRPEPIKKAKV. 3 stretches are compositionally biased toward acidic residues: residues 122-133, 152-163, and 182-193; these read SSDDDSTSDEET and SSDDDSSSDEET. The span at 224–238 shows a compositional bias: basic and acidic residues; the sequence is TPAKKEPIVVKKDSS. Composition is skewed to acidic residues over residues 267 to 278, 299 to 311, and 331 to 341; these read SSEEESSSDDEP, SSEE…ESDD, and SSDESSDESDK. The span at 342 to 367 shows a compositional bias: basic and acidic residues; the sequence is EESKDEKVTPKKKDSDVEMVDAEQKS. The span at 368-383 shows a compositional bias: polar residues; sequence NAKQPKTPTNQTQGGS. RRM domains are found at residues 384–460 and 479–558; these read KTLF…LANE and RTIY…ESRP. Polar residues predominate over residues 464 to 481; that stretch reads PRNSNPGRKGEGSQSRTI. Basic and acidic residues-rich tracts occupy residues 552–566 and 579–604; these read HVEE…EGRS and RHSD…DRGA. The span at 622–636 shows a compositional bias: polar residues; that stretch reads MESSKGTKTVFNDEE.

In terms of assembly, interacts with THAL in the nucleus. As to expression, expressed at low levels in flower buds.

It is found in the nucleus. The protein localises to the nucleolus. Involved in pre-rRNA processing and ribosome assembly. The polypeptide is Nucleolin 2 (Arabidopsis thaliana (Mouse-ear cress)).